Reading from the N-terminus, the 394-residue chain is MATVDRWLLPDGIEEVLPPEAARIEAARRQVLDLFHRWGYEFVVTPHIEYLESLLTGAGQDLDLRTFKVTDPASGRLMGFRADITPQVARMDAHSLRREGPSRLCYAGSVLHAQPRALSTSRSPIQLGAELYGDASPASDVEVISLMLDMLEMAEVPDVHMDLGHVGIYRGLARAAGLSGEVEQQLFDALQRKAVDEVEALTASLPGELRDMLRALAELCGGRDALEQGRVRLAAAPTEVQVALNELIEIADSLAARFPGLPLYFDLGELRGYHYHTGVVFAAFVPGVGQSIAQGGRYDDIGADFGRARPATGFSTDLKNLVTLGQARLDQAVSGIWAPAEGAGLWQAVQRLRRDGQRVVQALPGQDAASAREAGCDRQLALRDGNWQVAPLAS.

Belongs to the class-II aminoacyl-tRNA synthetase family. HisZ subfamily. Heteromultimer composed of HisG and HisZ subunits.

The protein localises to the cytoplasm. It participates in amino-acid biosynthesis; L-histidine biosynthesis; L-histidine from 5-phospho-alpha-D-ribose 1-diphosphate: step 1/9. In terms of biological role, required for the first step of histidine biosynthesis. May allow the feedback regulation of ATP phosphoribosyltransferase activity by histidine. This is ATP phosphoribosyltransferase regulatory subunit from Pseudomonas paraeruginosa (strain DSM 24068 / PA7) (Pseudomonas aeruginosa (strain PA7)).